The sequence spans 297 residues: Iron-sulfur cluster assembly SufBD family protein ycf24 (297 aa).

Belongs to the iron-sulfur cluster assembly SufBD family.

It localises to the plastid. Its subcellular location is the chloroplast. This is Iron-sulfur cluster assembly SufBD family protein ycf24 (ycf24) from Antithamnion sp. (Red alga).